Reading from the N-terminus, the 214-residue chain is UBX domain-containing protein 10 (214 aa).

Basic residues predominate over residues 1 to 13 (MHVTRPKSSKGRS). The disordered stretch occupies residues 1-79 (MHVTRPKSSK…AYDRPPEEPV (79 aa)). A compositionally biased stretch (polar residues) spans 16 to 25 (MITNSSMIYT). Positions 49 to 60 (SLRSRAILRRSS) are enriched in low complexity. Residues 127 to 204 (PEESDLLLAI…GVLNKSVLCI (78 aa)) enclose the UBX domain.

The protein belongs to the UBXN10 family.

It is found in the cell projection. The protein resides in the cilium. Required for ciliogenesis. Acts as a tethering factor that facilitates recruitment of vcp/p97 to the intraflagellar transport complex B (IFT-B) in cilia. The sequence is that of UBX domain-containing protein 10 from Danio rerio (Zebrafish).